Reading from the N-terminus, the 218-residue chain is Octanoyltransferase (218 aa).

Positions 32-214 (ALTPDEIWLV…HFTQLLGYND (183 aa)) constitute a BPL/LPL catalytic domain. Substrate contacts are provided by residues 71–78 (RGGQITYH), 143–145 (SLG), and 156–158 (GLA). The active-site Acyl-thioester intermediate is Cys-174.

The protein belongs to the LipB family.

The protein localises to the cytoplasm. It carries out the reaction octanoyl-[ACP] + L-lysyl-[protein] = N(6)-octanoyl-L-lysyl-[protein] + holo-[ACP] + H(+). Its pathway is protein modification; protein lipoylation via endogenous pathway; protein N(6)-(lipoyl)lysine from octanoyl-[acyl-carrier-protein]: step 1/2. Its function is as follows. Catalyzes the transfer of endogenously produced octanoic acid from octanoyl-acyl-carrier-protein onto the lipoyl domains of lipoate-dependent enzymes. Lipoyl-ACP can also act as a substrate although octanoyl-ACP is likely to be the physiological substrate. This Histophilus somni (strain 129Pt) (Haemophilus somnus) protein is Octanoyltransferase.